A 267-amino-acid polypeptide reads, in one-letter code: MITIKIGGSVVDDLHPSTIADIKKIAESEGVILVHGGGKEVTKVCEQLGKEPKFVTSPSGIKSRYTDKETAEIFTMVMSGRINKTIVQMLQKNGINAIGLSGVDAKVIEADRKKKLLIVNEKGRKQAIDGGYTGKIREVNASFIKSLLDQGLTPVISPIAISEESEFLNVDGDRAAAYVAGKVGSDKVLFITNVDGLLMDDKVVPKLTLAEAKEIRPKIGPGMEKKILASTEALDMGVTTALIANGQKENPISSAISHDNCTVIEHE.

Substrate is bound by residues 37-38 (GG), Arg64, and Asn169.

It belongs to the acetylglutamate kinase family. LysZ subfamily.

The protein localises to the cytoplasm. It catalyses the reaction [amino-group carrier protein]-C-terminal-N-(1,4-dicarboxybutan-1-yl)-L-glutamine + ATP = [amino-group carrier protein]-C-terminal-N-(1-carboxy-5-phosphooxy-5-oxopentan-1-yl)-L-glutamine + ADP. The enzyme catalyses [amino-group carrier protein]-C-terminal-gamma-(L-glutamyl)-L-glutamate + ATP = [amino-group carrier protein]-C-terminal-gamma-(5-phospho-L-glutamyl)-L-glutamate + ADP. Its pathway is amino-acid biosynthesis; L-lysine biosynthesis via AAA pathway; L-lysine from L-alpha-aminoadipate (Thermus route): step 2/5. It functions in the pathway amino-acid biosynthesis; L-arginine biosynthesis. Its function is as follows. Involved in both the arginine and lysine biosynthetic pathways. Phosphorylates the LysW-bound precursors glutamate (for arginine biosynthesis), respectively alpha-aminoadipate (for lysine biosynthesis). This chain is Putative [LysW]-aminoadipate/[LysW]-glutamate kinase, found in Nitrosopumilus maritimus (strain SCM1).